Here is a 345-residue protein sequence, read N- to C-terminus: Holliday junction branch migration complex subunit RuvB (345 aa).

The segment at 4–182 is large ATPase domain (RuvB-L); that stretch reads PDRIVSAVQR…FGIPIRLEFY (179 aa). ATP is bound by residues arginine 22, glycine 63, lysine 66, threonine 67, threonine 68, 129–131, arginine 172, tyrosine 182, and arginine 219; that span reads EDY. Mg(2+) is bound at residue threonine 67. The small ATPAse domain (RuvB-S) stretch occupies residues 183–253; sequence TVDELQAIVT…IADAALSRLE (71 aa). Residues 256-345 are head domain (RuvB-H); it reads ALGLDQLDRR…QSQINLFEEE (90 aa). Positions 292, 311, and 316 each coordinate DNA.

It belongs to the RuvB family. Homohexamer. Forms an RuvA(8)-RuvB(12)-Holliday junction (HJ) complex. HJ DNA is sandwiched between 2 RuvA tetramers; dsDNA enters through RuvA and exits via RuvB. An RuvB hexamer assembles on each DNA strand where it exits the tetramer. Each RuvB hexamer is contacted by two RuvA subunits (via domain III) on 2 adjacent RuvB subunits; this complex drives branch migration. In the full resolvosome a probable DNA-RuvA(4)-RuvB(12)-RuvC(2) complex forms which resolves the HJ.

The protein resides in the cytoplasm. It carries out the reaction ATP + H2O = ADP + phosphate + H(+). Its function is as follows. The RuvA-RuvB-RuvC complex processes Holliday junction (HJ) DNA during genetic recombination and DNA repair, while the RuvA-RuvB complex plays an important role in the rescue of blocked DNA replication forks via replication fork reversal (RFR). RuvA specifically binds to HJ cruciform DNA, conferring on it an open structure. The RuvB hexamer acts as an ATP-dependent pump, pulling dsDNA into and through the RuvAB complex. RuvB forms 2 homohexamers on either side of HJ DNA bound by 1 or 2 RuvA tetramers; 4 subunits per hexamer contact DNA at a time. Coordinated motions by a converter formed by DNA-disengaged RuvB subunits stimulates ATP hydrolysis and nucleotide exchange. Immobilization of the converter enables RuvB to convert the ATP-contained energy into a lever motion, pulling 2 nucleotides of DNA out of the RuvA tetramer per ATP hydrolyzed, thus driving DNA branch migration. The RuvB motors rotate together with the DNA substrate, which together with the progressing nucleotide cycle form the mechanistic basis for DNA recombination by continuous HJ branch migration. Branch migration allows RuvC to scan DNA until it finds its consensus sequence, where it cleaves and resolves cruciform DNA. This is Holliday junction branch migration complex subunit RuvB from Chelativorans sp. (strain BNC1).